The following is a 309-amino-acid chain: MEQLLRAQLHTTTLRAFGSSGGGCISEGYAYYTDSGPVFVKVNRRTQARQMFEGEMASLEALRNTGLVRVPKPMKVIDLPGGGAVFVMEHLKMKSLSSQASKLGEQMADLHLYNQKLREKSKTRQNTVGCGAEGAEPQGVTKFGFHTVTCCGFIPQVNEWQEDWPTFFTRHRLQAQLDLIEKDYADRETQELWSRLQVKIPDLFAGIEIVPALLHGDLWSGNVAEDDQGPVIYDPASFYGHSEFELAIASMFGGFPRSFFTAYHRKIPKAPGFDKRLLLYQLFNYLNHWNHFGREYRSPSLGVMRKLLR.

An N-acetylmethionine modification is found at Met-1. 89-91 (EHL) provides a ligand contact to ATP. Asp-217 acts as the Proton acceptor in catalysis.

It belongs to the fructosamine kinase family. In terms of assembly, monomer. As to expression, expressed in red blood cells, brain, heart, kidney and muscle. Lower expression is observed in liver. Not expressed in lung, spleen, testis and thymus.

It catalyses the reaction N(6)-(D-fructosyl)-L-lysyl-[protein] + ATP = N(6)-(3-O-phospho-D-fructosyl)-L-lysyl-[protein] + ADP + H(+). It carries out the reaction N(6)-D-ribulosyl-L-lysyl-[protein] + ATP = N(6)-(3-O-phospho-D-ribulosyl)-L-lysyl-[protein] + ADP + H(+). The enzyme catalyses N(6)-(D-psicosyl)-L-lysyl-[protein] + ATP = N(6)-(3-O-phospho-D-psicosyl)-L-lysyl-[protein] + ADP + H(+). Its function is as follows. Fructosamine-3-kinase involved in protein deglycation by mediating phosphorylation of fructoselysine residues on glycated proteins, to generate fructoselysine-3 phosphate. Fructoselysine-3 phosphate adducts are unstable and decompose under physiological conditions. Involved in intracellular deglycation in erythrocytes and pancreatic islets. Involved in the response to oxidative stress by mediating deglycation of NFE2L2/NRF2, glycation impairing NFE2L2/NRF2 function. Also able to phosphorylate psicosamines and ribulosamines. This is Fructosamine-3-kinase from Mus musculus (Mouse).